The sequence spans 420 residues: Lactosylceramide alpha-2,3-sialyltransferase (420 aa).

The segment at 1 to 39 (MRKKAAGGAERRPLKPRTEAAAAAPAGRAMPSDHSRMKL) is disordered. Residues 1–67 (MRKKAAGGAE…MRRPNLLLKD (67 aa)) lie on the Cytoplasmic side of the membrane. Residues 9-18 (AERRPLKPRT) are compositionally biased toward basic and acidic residues. The span at 20–29 (AAAAAPAGRA) shows a compositional bias: low complexity. Residues 68–88 (ILKCTLLLFGVWILFYILKLN) form a helical membrane-spanning segment. Topologically, residues 89-420 (HTTEECDMKR…DLSGGIHSEF (332 aa)) are lumenal. Cysteines 197 and 355 form a disulfide. N-linked (GlcNAc...) asparagine glycosylation occurs at asparagine 238.

It belongs to the glycosyltransferase 29 family.

It localises to the golgi apparatus membrane. The enzyme catalyses a beta-D-Gal-(1-&gt;4)-beta-D-Glc-(1&lt;-&gt;1)-Cer(d18:1(4E)) + CMP-N-acetyl-beta-neuraminate = a ganglioside GM3 (d18:1(4E)) + CMP + H(+). It catalyses the reaction ganglioside GA2 (d18:1(4E)/18:0) + CMP-N-acetyl-beta-neuraminate = ganglioside GM2 (d18:1(4E)/18:0) + CMP + H(+). It carries out the reaction a beta-D-Gal-(1&lt;-&gt;1')-ceramide + CMP-N-acetyl-beta-neuraminate = N-acetyl-alpha-neuraminosyl-(2-&gt;3)-beta-D-galactosyl-(1&lt;-&gt;1')-ceramide + CMP + H(+). The catalysed reaction is ganglioside GA1 (d18:1(4E)/18:0) + CMP-N-acetyl-beta-neuraminate = ganglioside GM1 (d18:1(4E)/18:0) + CMP + H(+). Its function is as follows. Transfers the sialyl group (N-acetyl-alpha-neuraminyl or NeuAc) from CMP-NeuAc to the non-reducing terminal galactose (Gal) of glycosphingolipids forming gangliosides (important molecules involved in the regulation of multiple cellular processes, including cell proliferation and differentiation, apoptosis, embryogenesis, development, and oncogenesis). Mainly involved in the biosynthesis of ganglioside GM3 but can also use different glycolipids as substrate acceptors such as D-galactosylceramide (GalCer), asialo-GM2 (GA2) and asialo-GM1 (GA1), although less preferentially than beta-D-Gal-(1-&gt;4)-beta-D-Glc-(1&lt;-&gt;1)-Cer (LacCer). This Bos taurus (Bovine) protein is Lactosylceramide alpha-2,3-sialyltransferase (ST3GAL5).